The following is a 197-amino-acid chain: Rac-like GTP-binding protein ARAC11 (197 aa).

A GTP-binding site is contributed by 13 to 20 (GDGAVGKT). Residues 35 to 43 (YVPTVFDNF) carry the Effector region motif. Residues 60–64 (DTAGQ) and 118–121 (TKLD) contribute to the GTP site. C194 carries the post-translational modification Cysteine methyl ester. C194 carries S-geranylgeranyl cysteine lipidation. A propeptide spans 195 to 197 (SIL) (removed in mature form).

This sequence belongs to the small GTPase superfamily. Rho family. As to quaternary structure, part of a complex containing ROPGEF1 and PRK2. Interacts with UGT1, ICR1, ICR2, ICR3, ICR4 and ICR5. Interacts with PHIP1 when activated by GTP. As to expression, exclusively expressed in mature pollen and pollen tubes.

The protein resides in the cytoplasm. The protein localises to the membrane. It carries out the reaction GTP + H2O = GDP + phosphate + H(+). In terms of biological role, may be involved in cell polarity control during the actin-dependent tip growth of pollen tubes. May regulate callose synthase 1 (CALS1) activity through the interaction with UGT1. Its function is as follows. Inactive GDP-bound Rho GTPases reside in the cytosol, are found in a complex with Rho GDP-dissociation inhibitors (Rho GDIs), and are released from the GDI protein in order to translocate to membranes upon activation. This is Rac-like GTP-binding protein ARAC11 from Arabidopsis thaliana (Mouse-ear cress).